The primary structure comprises 367 residues: AA9 family lytic polysaccharide monooxygenase A (367 aa).

The N-terminal stretch at 1–20 (MKSSTFGMLALAAAAKLVSA) is a signal peptide. His-21 contributes to the Cu(2+) binding site. Residues 37-56 (GNSESGYIRSPPSNSPITDV) are disordered. Cys-63 and Cys-183 are disulfide-bonded. His-102 is a binding site for Cu(2+). His-169 serves as a coordination point for O2. Tyr-180 contributes to the Cu(2+) binding site. Residues 234-287 (GASGSSSSPSASASASAPAATSAAPAPSSFTTIAKQPATSSTEAPSTENTSTTS) are disordered. Low complexity-rich tracts occupy residues 235–262 (ASGSSSSPSASASASAPAATSAAPAPSS) and 270–287 (PATSSTEAPSTENTSTTS). Asn-282 carries an N-linked (GlcNAc...) asparagine glycan. Positions 329 to 365 (GAVKEWYQCGGLNYKGSTQCEEGLTCKKWNPYYYQCI) constitute a CBM1 domain.

It belongs to the polysaccharide monooxygenase AA9 family. It depends on Cu(2+) as a cofactor.

It localises to the secreted. The catalysed reaction is [(1-&gt;4)-beta-D-glucosyl]n+m + reduced acceptor + O2 = 4-dehydro-beta-D-glucosyl-[(1-&gt;4)-beta-D-glucosyl]n-1 + [(1-&gt;4)-beta-D-glucosyl]m + acceptor + H2O.. In terms of biological role, lytic polysaccharide monooxygenase (LPMO) that depolymerizes crystalline and amorphous polysaccharides via the oxidation of scissile alpha- or beta-(1-4)-glycosidic bonds, yielding C4 oxidation products. Catalysis by LPMOs requires the reduction of the active-site copper from Cu(II) to Cu(I) by a reducing agent and H(2)O(2) or O(2) as a cosubstrate. Active on cellulose and cello-oligosaccharides, as well as plant cell wall-derived hemicellulosic polysaccharides. Also active on cello-oligosaccharides such as cellohexaose, cellopentaose or cellotetraose. This is AA9 family lytic polysaccharide monooxygenase A from Aspergillus oryzae (strain ATCC 42149 / RIB 40) (Yellow koji mold).